Reading from the N-terminus, the 153-residue chain is Flagellar assembly factor FliW (153 aa).

This sequence belongs to the FliW family. In terms of assembly, interacts with translational regulator CsrA and flagellin(s).

It is found in the cytoplasm. In terms of biological role, acts as an anti-CsrA protein, binds CsrA and prevents it from repressing translation of its target genes, one of which is flagellin. Binds to flagellin and participates in the assembly of the flagellum. This chain is Flagellar assembly factor FliW, found in Leptospira biflexa serovar Patoc (strain Patoc 1 / Ames).